Consider the following 482-residue polypeptide: NADH-quinone oxidoreductase subunit N (482 aa).

13 consecutive transmembrane segments (helical) span residues 10 to 30 (ALGP…LILY), 44 to 64 (VGAI…PLGA), 77 to 97 (GFAR…LLLA), 113 to 133 (ILIV…DLIG), 166 to 186 (FVLG…VYGF), 206 to 226 (LGLV…LAAV), 243 to 265 (VTAF…VFIG), 277 to 296 (IIVF…AIGQ), 302 to 322 (LMAY…AAGT), 328 to 348 (GVVV…AVIL), 374 to 394 (AFCL…AGFF), 397 to 417 (FYVF…IGVV), and 451 to 471 (IVLA…APLV).

This sequence belongs to the complex I subunit 2 family. In terms of assembly, NDH-1 is composed of 14 different subunits. Subunits NuoA, H, J, K, L, M, N constitute the membrane sector of the complex.

It is found in the cell inner membrane. The enzyme catalyses a quinone + NADH + 5 H(+)(in) = a quinol + NAD(+) + 4 H(+)(out). Its function is as follows. NDH-1 shuttles electrons from NADH, via FMN and iron-sulfur (Fe-S) centers, to quinones in the respiratory chain. The immediate electron acceptor for the enzyme in this species is believed to be ubiquinone. Couples the redox reaction to proton translocation (for every two electrons transferred, four hydrogen ions are translocated across the cytoplasmic membrane), and thus conserves the redox energy in a proton gradient. This chain is NADH-quinone oxidoreductase subunit N, found in Methylobacterium nodulans (strain LMG 21967 / CNCM I-2342 / ORS 2060).